The primary structure comprises 379 residues: Succinyl-diaminopimelate desuccinylase (379 aa).

H70 contributes to the Zn(2+) binding site. Residue D72 is part of the active site. A Zn(2+)-binding site is contributed by D103. Catalysis depends on E137, which acts as the Proton acceptor. Zn(2+)-binding residues include E138, E166, and H352.

Belongs to the peptidase M20A family. DapE subfamily. In terms of assembly, homodimer. Zn(2+) is required as a cofactor. Requires Co(2+) as cofactor.

It catalyses the reaction N-succinyl-(2S,6S)-2,6-diaminopimelate + H2O = (2S,6S)-2,6-diaminopimelate + succinate. It participates in amino-acid biosynthesis; L-lysine biosynthesis via DAP pathway; LL-2,6-diaminopimelate from (S)-tetrahydrodipicolinate (succinylase route): step 3/3. In terms of biological role, catalyzes the hydrolysis of N-succinyl-L,L-diaminopimelic acid (SDAP), forming succinate and LL-2,6-diaminopimelate (DAP), an intermediate involved in the bacterial biosynthesis of lysine and meso-diaminopimelic acid, an essential component of bacterial cell walls. This Burkholderia multivorans (strain ATCC 17616 / 249) protein is Succinyl-diaminopimelate desuccinylase.